A 357-amino-acid chain; its full sequence is Solute carrier family 25 member 3 (357 aa).

A mitochondrion-targeting transit peptide spans 1-45; the sequence is MFSSVAHLARANPFNAPHLQLVHDGLSGPRSPPAPPRRSRHLAAA. Topologically, residues 46 to 58 are mitochondrial intermembrane; that stretch reads AVEEYSCEFGSMK. 3 Solcar repeats span residues 58–142, 155–239, and 256–334; these read KYYA…FKAL, WRTS…TVEA, and EQLV…VKVY. The chain crosses the membrane as a helical span at residues 59-81; it reads YYALCGFGGVLSCGLTHTAVVPL. The Mitochondrial matrix portion of the chain corresponds to 82–116; the sequence is DLVKCRMQVDPQKYKGIFNGFSITLKEDGVRGLAK. Residue lysine 94 is modified to N6-acetyllysine. Residue lysine 107 is modified to N6-methyllysine. The chain crosses the membrane as a helical span at residues 117–136; sequence GWAPTLIGYSMQGLCKFGFY. The Mitochondrial intermembrane portion of the chain corresponds to 137-156; it reads EVFKALYSNILGEENTYLWR. The chain crosses the membrane as a helical span at residues 157–178; the sequence is TSLYLASSASAEFFADIALAPM. The Mitochondrial matrix segment spans residues 179 to 213; it reads EAAKVRIQTQPGYANTLREAVPKMYKEEGLNAFYK. Residue tyrosine 191 is modified to Phosphotyrosine. N6-acetyllysine is present on lysine 204. The helical transmembrane segment at 214-233 threads the bilayer; sequence GVAPLWMRQIPYTMMKFACF. Topologically, residues 234-256 are mitochondrial intermembrane; the sequence is ERTVEALYKFVVPKPRSECTKAE. A helical membrane pass occupies residues 257-279; sequence QLVVTFVAGYIAGVFCAIVSHPA. At 280-309 the chain is on the mitochondrial matrix side; sequence DSVVSVLNKEKGSTASQVLQRLGFRGVWKG. A helical transmembrane segment spans residues 310–328; it reads LFARIIMIGTLTALQWFIY. Over 329–357 the chain is Mitochondrial intermembrane; it reads DSVKVYFRLPRPPPPEMPESLKKKLGLTE.

It belongs to the mitochondrial carrier (TC 2.A.29) family. As to quaternary structure, interacts with PPIF; the interaction is impaired by CsA.

The protein localises to the mitochondrion inner membrane. The catalysed reaction is phosphate(in) + H(+)(in) = phosphate(out) + H(+)(out). Functionally, inorganic ion transporter that transports phosphate or copper ions across the mitochondrial inner membrane into the matrix compartment. Mediates proton-coupled symport of phosphate ions necessary for mitochondrial oxidative phosphorylation of ADP to ATP. Transports copper ions probably in the form of anionic copper(I) complexes to maintain mitochondrial matrix copper pool and to supply copper for cytochrome C oxidase complex assembly. May also play a role in regulation of the mitochondrial permeability transition pore (mPTP). The protein is Solute carrier family 25 member 3 of Mus musculus (Mouse).